Reading from the N-terminus, the 134-residue chain is Retinol-binding protein 2 (134 aa).

All-trans-retinol is bound by residues K41 and Q109.

The protein belongs to the calycin superfamily. Fatty-acid binding protein (FABP) family.

The protein resides in the cytoplasm. Its function is as follows. Intracellular transport of retinol. The sequence is that of Retinol-binding protein 2 (Rbp2) from Rattus norvegicus (Rat).